Reading from the N-terminus, the 137-residue chain is MLSPRKVKFRKWQKGRNKGVATRGATVAFGDIGLKAIEHGKLTSQQIEAARIAMMRHIKRGGKVWIRIFPDRPVTAKPLETRQGSGKGSPVGWCAPVKPGRVLYEIKGVSLELAKEALTRAAHKLPVKTVIVVREGV.

The protein belongs to the universal ribosomal protein uL16 family. In terms of assembly, part of the 50S ribosomal subunit.

Functionally, binds 23S rRNA and is also seen to make contacts with the A and possibly P site tRNAs. In Nitratidesulfovibrio vulgaris (strain ATCC 29579 / DSM 644 / CCUG 34227 / NCIMB 8303 / VKM B-1760 / Hildenborough) (Desulfovibrio vulgaris), this protein is Large ribosomal subunit protein uL16.